The following is a 315-amino-acid chain: Olfactory receptor 5M1 (315 aa).

The Extracellular segment spans residues 1–25 (MFSPNHTIVTEFILLGLTDDPVLEK). Asn5 is a glycosylation site (N-linked (GlcNAc...) asparagine). The helical transmembrane segment at 26-46 (ILFGVFLAIYLITLAGNLCMI) threads the bilayer. Residues 47–54 (LLIRTNSH) are Cytoplasmic-facing. The chain crosses the membrane as a helical span at residues 55 to 75 (LQTPMYFFLGHLSFVDICYSS). Over 76 to 99 (NVTPNMLHNFLSEQKTISYAGCFT) the chain is Extracellular. Cys97 and Cys189 form a disulfide bridge. Residues 100 to 120 (QCLLFIALVITEFYILASMAL) traverse the membrane as a helical segment. At 121–139 (DRYVAICSPLHYSSRMSKN) the chain is on the cytoplasmic side. A helical transmembrane segment spans residues 140–160 (ICVCLVTIPYMYGFLSGFSQS). The Extracellular portion of the chain corresponds to 161–196 (LLTFHLSFCGSLEINHFYCADPPLIMLACSDTRVKK). A helical membrane pass occupies residues 197-217 (MAMFVVAGFNLSSSLFIILLS). At 218–237 (YLFIFAAIFRIRSAEGRHKA) the chain is on the cytoplasmic side. A helical transmembrane segment spans residues 238–258 (FSTCASHLTIVTLFYGTLFCM). The Extracellular portion of the chain corresponds to 259–271 (YVRPPSEKSVEES). Residues 272–292 (KITAVFYTFLSPMLNPLIYSL) traverse the membrane as a helical segment. The Cytoplasmic segment spans residues 293-315 (RNTDVILAMQQMIRGKSFHKIAV).

The protein belongs to the G-protein coupled receptor 1 family.

Its subcellular location is the cell membrane. Its function is as follows. Odorant receptor. The protein is Olfactory receptor 5M1 (OR5M1) of Homo sapiens (Human).